A 648-amino-acid polypeptide reads, in one-letter code: S-M checkpoint control protein rad4 (648 aa).

BRCT domains lie at 2–92 and 96–185; these read GSSK…DDGL and KHFL…YFQL. The Nuclear localization signal motif lies at 242 to 249; it reads KRGKKRDR. 2 consecutive BRCT domains span residues 298-384 and 392-486; these read NEAK…EHAL and SLVP…SPWA. At Ser592 the chain carries Phosphoserine. Residues 643–648 carry the Nuclear localization signal motif; that stretch reads RKLRRR.

In terms of assembly, interacts with drc1/sld2. Interacts (via BRCT1,2 domains) with crb2; a single rad4 molecule interacts simultaneously with both 'Thr-187' phosphorylation sites in a crb2 dimer.

It localises to the nucleus. Essential component for DNA replication and also the checkpoint control system which couples S and M phases. May directly or indirectly interact with chromatin proteins to form the complex required for the initiation and/or progression of DNA synthesis. Interacts simultaneously with both 'Thr-187' phosphorylation sites in a crb2 dimer for establishing the DNA checkpoint. This chain is S-M checkpoint control protein rad4 (rad4), found in Schizosaccharomyces pombe (strain 972 / ATCC 24843) (Fission yeast).